A 73-amino-acid chain; its full sequence is Copper chaperone ATX1 (73 aa).

In terms of domain architecture, HMA spans 4 to 68; the sequence is IKHYQFNVVM…KIKKTGKEVR (65 aa). Cys15 and Cys18 together coordinate Cu(+).

It belongs to the ATX1 family. As to quaternary structure, homodimer. Interacts with CCC2 via the copper anion.

Its subcellular location is the cytoplasm. Its activity is regulated as follows. Tetrathiomolybdate directly and reversibly down-regulates copper delivery to secreted metalloenzymes. Copper homeostasis factor that specifically transports copper to the secretory pathway for incorporation into copper enzymes destined for the cell surface or extracellular milieu. Shuttles copper to the transport ATPase CCC2 on a post-Golgi vesicle for eventual targeting to the cell-surface high-affinity iron uptake protein FET3. Protects against oxygen toxicity. This is Copper chaperone ATX1 from Saccharomyces cerevisiae (strain ATCC 204508 / S288c) (Baker's yeast).